Here is a 332-residue protein sequence, read N- to C-terminus: Sphingolipid delta(4)-desaturase DES1-like (332 aa).

Transmembrane regions (helical) follow at residues 55–75 (PWAF…AAIL), 83–103 (ILSI…LAIH), and 119–139 (CLGI…FQKY). The short motif at 103-107 (HELSH) is the Histidine box-1 element. A Histidine box-2 motif is present at residues 140–144 (HLEHH). 3 helical membrane passes run 164 to 184 (LVTN…FYAL), 197 to 217 (WEFI…LFFG), and 222 to 242 (AYLI…GHFI). The Histidine box-3 signature appears at 271 to 275 (HNEHH).

The protein belongs to the fatty acid desaturase type 1 family. DEGS subfamily. As to expression, specifically expressed in flowers.

The protein localises to the endoplasmic reticulum membrane. It catalyses the reaction an N-acylsphinganine + 2 Fe(II)-[cytochrome b5] + O2 + 2 H(+) = an N-acylsphing-4-enine + 2 Fe(III)-[cytochrome b5] + 2 H2O. Its function is as follows. Sphingolipid-delta-4-desaturase required for the biosynthesis of delta-4-unsaturated sphingolipids and derivatives. May be required for the biosynthesis of glucosylceramides. The sequence is that of Sphingolipid delta(4)-desaturase DES1-like from Arabidopsis thaliana (Mouse-ear cress).